The primary structure comprises 438 residues: Adenylosuccinate synthetase (438 aa).

GTP-binding positions include 13-19 (GDEGKGK) and 41-43 (GHT). The active-site Proton acceptor is the aspartate 14. Residues aspartate 14 and glycine 41 each coordinate Mg(2+). IMP-binding positions include 14-17 (DEGK), 39-42 (NAGH), threonine 136, arginine 150, glutamine 231, threonine 246, and arginine 310. The Proton donor role is filled by histidine 42. Residue 306–312 (STTGRRR) coordinates substrate. GTP-binding positions include arginine 312, 338-340 (KID), and 421-423 (STG).

This sequence belongs to the adenylosuccinate synthetase family. Homodimer. Mg(2+) serves as cofactor.

It localises to the cytoplasm. The catalysed reaction is IMP + L-aspartate + GTP = N(6)-(1,2-dicarboxyethyl)-AMP + GDP + phosphate + 2 H(+). It functions in the pathway purine metabolism; AMP biosynthesis via de novo pathway; AMP from IMP: step 1/2. Its function is as follows. Plays an important role in the de novo pathway of purine nucleotide biosynthesis. Catalyzes the first committed step in the biosynthesis of AMP from IMP. In Blochmanniella floridana, this protein is Adenylosuccinate synthetase.